Here is a 794-residue protein sequence, read N- to C-terminus: Phenylalanine--tRNA ligase beta subunit (794 aa).

The 119-residue stretch at 40–158 (NSLNSELILG…LKKYIGSDVK (119 aa)) folds into the tRNA-binding domain. Residues 402–477 (KNKQSLEIKL…RLYSYDKIDE (76 aa)) enclose the B5 domain. Asp-455, Asp-461, Glu-464, and Glu-465 together coordinate Mg(2+). Residues 702–794 (SKFQSSSRDL…NIKQMKVVIR (93 aa)) enclose the FDX-ACB domain.

Belongs to the phenylalanyl-tRNA synthetase beta subunit family. Type 1 subfamily. In terms of assembly, tetramer of two alpha and two beta subunits. Mg(2+) serves as cofactor.

The protein resides in the cytoplasm. The catalysed reaction is tRNA(Phe) + L-phenylalanine + ATP = L-phenylalanyl-tRNA(Phe) + AMP + diphosphate + H(+). The sequence is that of Phenylalanine--tRNA ligase beta subunit from Mycoplasma mycoides subsp. mycoides SC (strain CCUG 32753 / NCTC 10114 / PG1).